The primary structure comprises 189 residues: Peptidyl-tRNA hydrolase (189 aa).

Position 14 (Tyr14) interacts with tRNA. The Proton acceptor role is filled by His19. TRNA contacts are provided by Tyr64, Asn66, and Asn112.

The protein belongs to the PTH family. Monomer.

The protein localises to the cytoplasm. It catalyses the reaction an N-acyl-L-alpha-aminoacyl-tRNA + H2O = an N-acyl-L-amino acid + a tRNA + H(+). Hydrolyzes ribosome-free peptidyl-tRNAs (with 1 or more amino acids incorporated), which drop off the ribosome during protein synthesis, or as a result of ribosome stalling. Functionally, catalyzes the release of premature peptidyl moieties from peptidyl-tRNA molecules trapped in stalled 50S ribosomal subunits, and thus maintains levels of free tRNAs and 50S ribosomes. This Dehalococcoides mccartyi (strain ATCC BAA-2100 / JCM 16839 / KCTC 5957 / BAV1) protein is Peptidyl-tRNA hydrolase.